Here is a 436-residue protein sequence, read N- to C-terminus: Nucleolar protein 4-like (436 aa).

The disordered stretch occupies residues 1-184; it reads MSDSTWMSAD…KMNDSEGMDP (184 aa). A compositionally biased stretch (low complexity) spans 41–61; sequence SESGSGNGSSTLNPSTSSSTQ. At Ser130 the chain carries Phosphoserine. A compositionally biased stretch (acidic residues) spans 160-169; that stretch reads ADDDDDDHDD. Residues 170 to 184 are compositionally biased toward basic and acidic residues; it reads HEDNDKMNDSEGMDP. Ser295 is subject to Phosphoserine. A compositionally biased stretch (polar residues) spans 351 to 366; the sequence is QPPASLQTGNHSNGPT. The interval 351-400 is disordered; it reads QPPASLQTGNHSNGPTDLSMKGGASTTSTTPTPTPSSTSTSRPVPTAQLS. Positions 375 to 396 are enriched in low complexity; it reads STTSTTPTPTPSSTSTSRPVPT.

In Homo sapiens (Human), this protein is Nucleolar protein 4-like (NOL4L).